The primary structure comprises 518 residues: Light-independent protochlorophyllide reductase subunit B (518 aa).

Asp36 lines the [4Fe-4S] cluster pocket. Residue Asp285 is the Proton donor of the active site. 420 to 421 (GL) contributes to the substrate binding site.

It belongs to the ChlB/BchB/BchZ family. As to quaternary structure, protochlorophyllide reductase is composed of three subunits; BchL, BchN and BchB. Forms a heterotetramer of two BchB and two BchN subunits. The cofactor is [4Fe-4S] cluster.

It catalyses the reaction chlorophyllide a + oxidized 2[4Fe-4S]-[ferredoxin] + 2 ADP + 2 phosphate = protochlorophyllide a + reduced 2[4Fe-4S]-[ferredoxin] + 2 ATP + 2 H2O. It functions in the pathway porphyrin-containing compound metabolism; bacteriochlorophyll biosynthesis (light-independent). Functionally, component of the dark-operative protochlorophyllide reductase (DPOR) that uses Mg-ATP and reduced ferredoxin to reduce ring D of protochlorophyllide (Pchlide) to form chlorophyllide a (Chlide). This reaction is light-independent. The NB-protein (BchN-BchB) is the catalytic component of the complex. The chain is Light-independent protochlorophyllide reductase subunit B from Bradyrhizobium sp. (strain ORS 278).